A 390-amino-acid chain; its full sequence is S-adenosylmethionine synthase 1 (390 aa).

E9 serves as a coordination point for Mg(2+). Residue H15 participates in ATP binding. E43 contacts K(+). The L-methionine site is built by E56 and Q99. ATP contacts are provided by residues 167–169, 235–238, D246, 252–253, A269, K273, and K277; these read DGK, SGRF, and RK. D246 is a binding site for L-methionine. K277 provides a ligand contact to L-methionine.

Belongs to the AdoMet synthase family. As to quaternary structure, homotetramer. It depends on Mn(2+) as a cofactor. Mg(2+) serves as cofactor. Co(2+) is required as a cofactor. The cofactor is K(+).

Its subcellular location is the cytoplasm. The catalysed reaction is L-methionine + ATP + H2O = S-adenosyl-L-methionine + phosphate + diphosphate. It participates in amino-acid biosynthesis; S-adenosyl-L-methionine biosynthesis; S-adenosyl-L-methionine from L-methionine: step 1/1. In terms of biological role, catalyzes the formation of S-adenosylmethionine from methionine and ATP. The reaction comprises two steps that are both catalyzed by the same enzyme: formation of S-adenosylmethionine (AdoMet) and triphosphate, and subsequent hydrolysis of the triphosphate. The sequence is that of S-adenosylmethionine synthase 1 (SAM1) from Actinidia chinensis var. chinensis (Chinese soft-hair kiwi).